A 786-amino-acid polypeptide reads, in one-letter code: Protein RDM16 (786 aa).

3 stretches are compositionally biased toward basic and acidic residues: residues 1-80 (MDKE…SRDR), 87-112 (RSHEGSKEKESRSKRKDREEENGARD), and 123-143 (NGERRSRFEDVAIEVENKDAQ). 4 disordered regions span residues 1–223 (MDKE…SANL), 255–283 (KKATKPTSEGSPHTRVPPSTTTPAVSTGT), 532–557 (RPIEPPAEAAPPPPQPLKLTKKEQKK), and 616–642 (EREQAHTDRNAARKLTPAEKREKKERK). The span at 145-164 (SEGSGATNPTSGVTMGASTY) shows a compositional bias: polar residues. Low complexity predominate over residues 165 to 176 (SSIPSEASAAPS). Residues 177 to 189 (QTLLTKVSSISTT) show a composition bias toward polar residues. Residues 190 to 203 (DENKASVVRSHEVP) are compositionally biased toward basic and acidic residues. Over residues 268–283 (TRVPPSTTTPAVSTGT) the composition is skewed to low complexity. The span at 534–547 (IEPPAEAAPPPPQP) shows a compositional bias: pro residues.

Its subcellular location is the nucleus. The protein localises to the nucleoplasm. Functionally, functions in the RNA-directed DNA methylation (RdDM) pathway. Acts as a pre-mRNA splicing factor, likely by affecting Pol V transcripts. Affects DNA methylation of transposable elements (TEs) and preferentially influences NRPD1- and ROS1-targeted loci. The protein is Protein RDM16 of Arabidopsis thaliana (Mouse-ear cress).